The following is a 147-amino-acid chain: Hemoglobin subunit beta (147 aa).

N-acetylvaline is present on valine 2. The region spanning 3-147 (HLTGEEKSAV…VANALAHKYH (145 aa)) is the Globin domain. Position 13 is a phosphothreonine (threonine 13). Position 45 is a phosphoserine (serine 45). Lysine 60 is modified (N6-acetyllysine). A heme b-binding site is contributed by histidine 64. Lysine 83 is modified (N6-acetyllysine). Residue histidine 93 coordinates heme b. Cysteine 94 carries the post-translational modification S-nitrosocysteine. Lysine 145 is subject to N6-acetyllysine.

It belongs to the globin family. As to quaternary structure, heterotetramer of two alpha chains and two beta chains. In terms of tissue distribution, red blood cells.

Involved in oxygen transport from the lung to the various peripheral tissues. This Callimico goeldii (Goeldi's marmoset) protein is Hemoglobin subunit beta (HBB).